The primary structure comprises 510 residues: Glycerol kinase (510 aa).

Thr-13 is a binding site for ADP. Residues Thr-13 and Thr-14 each contribute to the ATP site. Thr-13 provides a ligand contact to sn-glycerol 3-phosphate. Arg-17 provides a ligand contact to ADP. Sn-glycerol 3-phosphate is bound by residues Arg-83, Glu-84, Tyr-135, and Asp-255. Glycerol is bound by residues Arg-83, Glu-84, Tyr-135, Asp-255, and Gln-256. Thr-277, Gly-321, Gly-421, and Asn-425 together coordinate ADP. Residues Thr-277, Gly-321, and Gly-421 each contribute to the ATP site.

It belongs to the FGGY kinase family.

It catalyses the reaction glycerol + ATP = sn-glycerol 3-phosphate + ADP + H(+). The protein operates within polyol metabolism; glycerol degradation via glycerol kinase pathway; sn-glycerol 3-phosphate from glycerol: step 1/1. Key enzyme in the regulation of glycerol uptake and metabolism. Catalyzes the phosphorylation of glycerol to yield sn-glycerol 3-phosphate. The protein is Glycerol kinase of Haloarcula marismortui (strain ATCC 43049 / DSM 3752 / JCM 8966 / VKM B-1809) (Halobacterium marismortui).